The chain runs to 177 residues: Large ribosomal subunit protein uL6 (177 aa).

The protein belongs to the universal ribosomal protein uL6 family. In terms of assembly, part of the 50S ribosomal subunit.

Functionally, this protein binds to the 23S rRNA, and is important in its secondary structure. It is located near the subunit interface in the base of the L7/L12 stalk, and near the tRNA binding site of the peptidyltransferase center. This is Large ribosomal subunit protein uL6 from Yersinia pseudotuberculosis serotype O:1b (strain IP 31758).